We begin with the raw amino-acid sequence, 286 residues long: 2-hydroxy-6-oxononadienedioate/2-hydroxy-6-oxononatrienedioate hydrolase (286 aa).

In terms of domain architecture, AB hydrolase-1 spans 36-271 (VIMLHGGGPG…RCGHWAQWEH (236 aa)). H265 functions as the Proton acceptor in the catalytic mechanism.

The protein belongs to the AB hydrolase superfamily. BphD family. As to quaternary structure, homodimer.

It carries out the reaction (2Z,4E)-2-hydroxy-6-oxonona-2,4-dienedioate + H2O = (2Z)-2-hydroxypenta-2,4-dienoate + succinate + H(+). It catalyses the reaction (2Z,4E,7E)-2-hydroxy-6-oxonona-2,4,7-trienedioate + H2O = (2Z)-2-hydroxypenta-2,4-dienoate + fumarate + H(+). The protein operates within aromatic compound metabolism; 3-phenylpropanoate degradation. In terms of biological role, catalyzes the cleavage of the C5-C6 bond of 2-hydroxy-6-oxononadienedioate, and probably also 2-hydroxy-6-oxononatrienedioate, a dienol ring fission product of the bacterial meta-cleavage pathway for degradation of phenylpropionic acid. This chain is 2-hydroxy-6-oxononadienedioate/2-hydroxy-6-oxononatrienedioate hydrolase (mhpC), found in Comamonas testosteroni (Pseudomonas testosteroni).